The sequence spans 312 residues: tRNA dimethylallyltransferase (312 aa).

11–18 serves as a coordination point for ATP; sequence GPTAVGKT. A substrate-binding site is contributed by 13-18; that stretch reads TAVGKT. The segment at 159–163 is interaction with substrate tRNA; the sequence is QRVLR.

Belongs to the IPP transferase family. As to quaternary structure, monomer. Mg(2+) is required as a cofactor.

The enzyme catalyses adenosine(37) in tRNA + dimethylallyl diphosphate = N(6)-dimethylallyladenosine(37) in tRNA + diphosphate. In terms of biological role, catalyzes the transfer of a dimethylallyl group onto the adenine at position 37 in tRNAs that read codons beginning with uridine, leading to the formation of N6-(dimethylallyl)adenosine (i(6)A). In Macrococcus caseolyticus (strain JCSC5402) (Macrococcoides caseolyticum), this protein is tRNA dimethylallyltransferase.